A 123-amino-acid chain; its full sequence is Fluoride-specific ion channel FluC (123 aa).

Transmembrane regions (helical) follow at residues methionine 1–alanine 21, leucine 32–phenylalanine 52, phenylalanine 66–phenylalanine 86, and glycine 99–phenylalanine 119. Na(+) contacts are provided by glycine 73 and threonine 76.

Belongs to the fluoride channel Fluc/FEX (TC 1.A.43) family.

The protein resides in the cell inner membrane. The enzyme catalyses fluoride(in) = fluoride(out). With respect to regulation, na(+) is not transported, but it plays an essential structural role and its presence is essential for fluoride channel function. Fluoride-specific ion channel. Important for reducing fluoride concentration in the cell, thus reducing its toxicity. This is Fluoride-specific ion channel FluC from Psychrobacter cryohalolentis (strain ATCC BAA-1226 / DSM 17306 / VKM B-2378 / K5).